Consider the following 905-residue polypeptide: Patched domain-containing protein 3 (905 aa).

The tract at residues methionine 1–arginine 67 is disordered. A helical membrane pass occupies residues tryptophan 94–leucine 114. N-linked (GlcNAc...) asparagine glycans are attached at residues asparagine 146, asparagine 199, asparagine 229, and asparagine 233. A run of 6 helical transmembrane segments spans residues threonine 337–cysteine 357, valine 369–leucine 389, isoleucine 391–valine 411, valine 441–threonine 461, glycine 475–leucine 495, and phenylalanine 558–valine 578. The SSD domain occupies valine 338–leucine 495. N-linked (GlcNAc...) asparagine glycosylation is found at asparagine 647, asparagine 661, and asparagine 692. A run of 5 helical transmembrane segments spans residues valine 759–cysteine 779, leucine 781–tryptophan 801, leucine 813–serine 833, leucine 849–alanine 869, and isoleucine 882–leucine 902.

Belongs to the patched family. Expressed in germ cells of the testis (at protein level).

Its subcellular location is the cell projection. The protein resides in the cilium. It localises to the flagellum membrane. It is found in the endoplasmic reticulum membrane. In terms of biological role, may play a role in sperm development or sperm function. However, does not appear to have an essential role in spermatogenesis or male fertility. The chain is Patched domain-containing protein 3 from Rattus norvegicus (Rat).